The primary structure comprises 583 residues: Sensor protein SrrB (583 aa).

The Cytoplasmic segment spans residues 1–11 (MMSRLNSVVIK). The helical transmembrane segment at 12 to 32 (LWLTIILIVTTVLILLSIALI) threads the bilayer. Residues 33–174 (TFMQYYFTQE…SIEDTNNAIT (142 aa)) are Extracellular-facing. The helical transmembrane segment at 175 to 195 (IITIITAVIFLTITTVFAFFL) threads the bilayer. Residues 196–583 (SSRITKPLRR…TFIIKLPKPE (388 aa)) lie on the Cytoplasmic side of the membrane. One can recognise an HAMP domain in the interval 197–249 (SRITKPLRRLRDQATRVSEGDYSYKPSVTTKDEIGQLSQAFNQMSTEIEEHVD). The region spanning 366–583 (NVSHELRTPI…TFIIKLPKPE (218 aa)) is the Histidine kinase domain. His369 carries the post-translational modification Phosphohistidine; by autocatalysis.

Its subcellular location is the cell membrane. The enzyme catalyses ATP + protein L-histidine = ADP + protein N-phospho-L-histidine.. Member of the two-component regulatory system SrrA/SrrB, which is involved in the global regulation of staphylococcal virulence factors in response to environmental oxygen levels as well as biofilm formation. Also plays an essential role in host-derived nitric oxide resistance by regulating hmp/flavohemoglobin, an enzyme that detoxifies nitric oxide by converting it to nitrate. Functions as a sensor protein kinase which is autophosphorylated at a histidine residue and transfers its phosphate group to SrrA. In turn, SrrA binds to the upstream promoter regions of the target genes to positively and negatively regulate their expression. This Staphylococcus aureus (strain Mu50 / ATCC 700699) protein is Sensor protein SrrB (srrB).